The chain runs to 290 residues: ATP synthase subunit a (290 aa).

7 helical membrane passes run 54-74 (AVHLDTLGWSLLMGAIFILLF), 115-135 (IAPLALTIFVWVFLMNSLKWI), 136-156 (PVDYIPGIAHLLGLPAFKIVP), 164-184 (FGLSLGVFILILFYSFKVKGF), 201-221 (LVPFNLFLEILGLLTKPLSLA), 233-253 (VVFILIALLPFYVQWTLNVPW), and 254-274 (AIFHILVIPLQAFIFMVLTVV).

Belongs to the ATPase A chain family. As to quaternary structure, F-type ATPases have 2 components, CF(1) - the catalytic core - and CF(0) - the membrane proton channel. CF(1) has five subunits: alpha(3), beta(3), gamma(1), delta(1), epsilon(1). CF(0) has three main subunits: a(1), b(2) and c(9-12). The alpha and beta chains form an alternating ring which encloses part of the gamma chain. CF(1) is attached to CF(0) by a central stalk formed by the gamma and epsilon chains, while a peripheral stalk is formed by the delta and b chains.

Its subcellular location is the cell inner membrane. Functionally, key component of the proton channel; it plays a direct role in the translocation of protons across the membrane. The polypeptide is ATP synthase subunit a (Stutzerimonas stutzeri (strain A1501) (Pseudomonas stutzeri)).